Here is a 249-residue protein sequence, read N- to C-terminus: uncharacterized protein (249 aa).

2 stretches are compositionally biased toward polar residues: residues 66-79 (NASLESGQSSTISP) and 92-119 (ASGSVSANKTFQSTESSALHQPKSSSSE). The segment at 66 to 142 (NASLESGQSS…GPTSPRVTPG (77 aa)) is disordered.

The protein localises to the plastid. It is found in the chloroplast. This is an uncharacterized protein from Chlorella vulgaris (Green alga).